Reading from the N-terminus, the 137-residue chain is Nucleoside diphosphate kinase (137 aa).

The ATP site is built by Lys-11, Phe-59, Arg-87, Thr-93, Arg-104, and Asn-114. The active-site Pros-phosphohistidine intermediate is the His-117.

The protein belongs to the NDK family. Homotetramer. Mg(2+) is required as a cofactor.

It localises to the cytoplasm. It catalyses the reaction a 2'-deoxyribonucleoside 5'-diphosphate + ATP = a 2'-deoxyribonucleoside 5'-triphosphate + ADP. The enzyme catalyses a ribonucleoside 5'-diphosphate + ATP = a ribonucleoside 5'-triphosphate + ADP. Functionally, major role in the synthesis of nucleoside triphosphates other than ATP. The ATP gamma phosphate is transferred to the NDP beta phosphate via a ping-pong mechanism, using a phosphorylated active-site intermediate. The protein is Nucleoside diphosphate kinase of Frankia alni (strain DSM 45986 / CECT 9034 / ACN14a).